The primary structure comprises 199 residues: Transmembrane protein 9B (199 aa).

Positions 1-34 (MASLWCGNLLRLGSGLSMSCLALSVLLLAQLTGA) are cleaved as a signal peptide. Asn61 is a glycosylation site (N-linked (GlcNAc...) asparagine). Residues 106 to 126 (IIIYLSILGLLLLYMVYLTLV) traverse the membrane as a helical segment. Residues Ser143 and Ser190 each carry the phosphoserine modification.

The protein belongs to the TMEM9 family. In terms of processing, N-glycosylated.

Its subcellular location is the lysosome membrane. The protein resides in the early endosome membrane. Enhances production of pro-inflammatory cytokines induced by TNF, IL1B, and TLR ligands. Has a role in TNF activation of both the NF-kappaB and MAPK pathways. The chain is Transmembrane protein 9B (Tmem9b) from Mus musculus (Mouse).